We begin with the raw amino-acid sequence, 214 residues long: uncharacterized protein (214 aa).

This is an uncharacterized protein from Methanocaldococcus jannaschii (strain ATCC 43067 / DSM 2661 / JAL-1 / JCM 10045 / NBRC 100440) (Methanococcus jannaschii).